The primary structure comprises 391 residues: Protein kinase ORF14 (391 aa).

A Protein kinase domain is found at 109–391 (VPLRHTRGNI…ETLVDEFSKI (283 aa)). K134 serves as a coordination point for ATP. Residue D235 is the Proton acceptor of the active site.

Belongs to the protein kinase superfamily. Ser/Thr protein kinase family.

It carries out the reaction L-seryl-[protein] + ATP = O-phospho-L-seryl-[protein] + ADP + H(+). It catalyses the reaction L-threonyl-[protein] + ATP = O-phospho-L-threonyl-[protein] + ADP + H(+). This Ictalurid herpesvirus 1 (strain Auburn) (IcHV-1) protein is Protein kinase ORF14 (ORF14).